The sequence spans 236 residues: uncharacterized protein (236 aa).

The protein resides in the virion. This is an uncharacterized protein from Acanthamoeba polyphaga (Amoeba).